A 514-amino-acid chain; its full sequence is Flagellin B (514 aa).

This sequence belongs to the bacterial flagellin family. In terms of assembly, heteromer of FlaA and FlaB. FlaB is located proximal to the hook while the remainder of the filament is composed of the predominant FlaA.

It is found in the secreted. The protein resides in the bacterial flagellum. Flagellin is the subunit protein which polymerizes to form the filaments of bacterial flagella. Important for motility and virulence. The chain is Flagellin B (flaB) from Helicobacter pylori (strain ATCC 700392 / 26695) (Campylobacter pylori).